A 339-amino-acid polypeptide reads, in one-letter code: DNA-directed RNA polymerase subunit alpha (339 aa).

Positions 1 to 233 are alpha N-terminal domain (alpha-NTD); sequence MVREEVAGST…DLFLPFLHAE (233 aa). Residues 264–339 are alpha C-terminal domain (alpha-CTD); sequence KKGIPLNCIF…IDLLKNKLSF (76 aa).

The protein belongs to the RNA polymerase alpha chain family. As to quaternary structure, in plastids the minimal PEP RNA polymerase catalytic core is composed of four subunits: alpha, beta, beta', and beta''. When a (nuclear-encoded) sigma factor is associated with the core the holoenzyme is formed, which can initiate transcription.

Its subcellular location is the plastid. The protein resides in the chloroplast. The enzyme catalyses RNA(n) + a ribonucleoside 5'-triphosphate = RNA(n+1) + diphosphate. In terms of biological role, DNA-dependent RNA polymerase catalyzes the transcription of DNA into RNA using the four ribonucleoside triphosphates as substrates. This Psathyrostachys fragilis (Russian wild rye) protein is DNA-directed RNA polymerase subunit alpha.